The sequence spans 1392 residues: DNA-directed RNA polymerase subunit beta'' (1392 aa).

The Zn(2+) site is built by C224, C295, C302, and C305.

It belongs to the RNA polymerase beta' chain family. RpoC2 subfamily. As to quaternary structure, in plastids the minimal PEP RNA polymerase catalytic core is composed of four subunits: alpha, beta, beta', and beta''. When a (nuclear-encoded) sigma factor is associated with the core the holoenzyme is formed, which can initiate transcription. It depends on Zn(2+) as a cofactor.

The protein resides in the plastid. It localises to the chloroplast. The enzyme catalyses RNA(n) + a ribonucleoside 5'-triphosphate = RNA(n+1) + diphosphate. DNA-dependent RNA polymerase catalyzes the transcription of DNA into RNA using the four ribonucleoside triphosphates as substrates. In Nicotiana tomentosiformis (Tobacco), this protein is DNA-directed RNA polymerase subunit beta''.